We begin with the raw amino-acid sequence, 371 residues long: Enoyl-[acyl-carrier-protein] reductase [NADH] 2, chloroplastic (371 aa).

The transit peptide at 1–67 (MGASVTTGLQ…SLNHKRFAVR (67 aa)) directs the protein to the chloroplast. NAD(+) contacts are provided by residues Gly87, Tyr94, 151–152 (DA), 198–199 (SL), and Leu248. Catalysis depends on proton acceptor residues Tyr250 and Tyr260. Residues Lys268 and 298–302 (LGSRA) each bind NAD(+).

The protein belongs to the short-chain dehydrogenases/reductases (SDR) family. FabI subfamily. As to quaternary structure, homotetramer.

It localises to the plastid. It is found in the chloroplast. It carries out the reaction a 2,3-saturated acyl-[ACP] + NAD(+) = a (2E)-enoyl-[ACP] + NADH + H(+). It participates in lipid metabolism; fatty acid biosynthesis. Catalyzes the NAD-dependent reduction of a carbon-carbon double bond in an enoyl moiety that is covalently linked to an acyl carrier protein (ACP). Catalyzes the last reduction step in the de novo synthesis cycle of fatty acids. Involved in the elongation cycle of fatty acids which are used in lipid metabolism. Required for normal plant growth. This Oryza sativa subsp. japonica (Rice) protein is Enoyl-[acyl-carrier-protein] reductase [NADH] 2, chloroplastic.